Here is a 168-residue protein sequence, read N- to C-terminus: Ribosome-binding factor A (168 aa).

Residues 122 to 136 are compositionally biased toward basic and acidic residues; sequence VRRDARPAGDDDPYR. Residues 122 to 168 form a disordered region; it reads VRRDARPAGDDDPYRRPRPAAGEVDELSEVDELSEVDEYGGTARQEG. A compositionally biased stretch (acidic residues) spans 144–159; it reads EVDELSEVDELSEVDE.

It belongs to the RbfA family. In terms of assembly, monomer. Binds 30S ribosomal subunits, but not 50S ribosomal subunits or 70S ribosomes.

Its subcellular location is the cytoplasm. Its function is as follows. One of several proteins that assist in the late maturation steps of the functional core of the 30S ribosomal subunit. Associates with free 30S ribosomal subunits (but not with 30S subunits that are part of 70S ribosomes or polysomes). Required for efficient processing of 16S rRNA. May interact with the 5'-terminal helix region of 16S rRNA. This chain is Ribosome-binding factor A, found in Frankia casuarinae (strain DSM 45818 / CECT 9043 / HFP020203 / CcI3).